Here is a 375-residue protein sequence, read N- to C-terminus: Succinyl-diaminopimelate desuccinylase (375 aa).

A Zn(2+)-binding site is contributed by His66. The active site involves Asp68. Residue Asp99 participates in Zn(2+) binding. Catalysis depends on Glu133, which acts as the Proton acceptor. Zn(2+) contacts are provided by Glu134, Glu162, and His348.

It belongs to the peptidase M20A family. DapE subfamily. In terms of assembly, homodimer. It depends on Zn(2+) as a cofactor. Co(2+) is required as a cofactor.

It catalyses the reaction N-succinyl-(2S,6S)-2,6-diaminopimelate + H2O = (2S,6S)-2,6-diaminopimelate + succinate. The protein operates within amino-acid biosynthesis; L-lysine biosynthesis via DAP pathway; LL-2,6-diaminopimelate from (S)-tetrahydrodipicolinate (succinylase route): step 3/3. In terms of biological role, catalyzes the hydrolysis of N-succinyl-L,L-diaminopimelic acid (SDAP), forming succinate and LL-2,6-diaminopimelate (DAP), an intermediate involved in the bacterial biosynthesis of lysine and meso-diaminopimelic acid, an essential component of bacterial cell walls. The protein is Succinyl-diaminopimelate desuccinylase of Herminiimonas arsenicoxydans.